A 310-amino-acid polypeptide reads, in one-letter code: Ribosomal protein uL3 glutamine methyltransferase (310 aa).

This sequence belongs to the protein N5-glutamine methyltransferase family. PrmB subfamily.

It carries out the reaction L-glutaminyl-[ribosomal protein uL3] + S-adenosyl-L-methionine = N(5)-methyl-L-glutaminyl-[ribosomal protein uL3] + S-adenosyl-L-homocysteine + H(+). Functionally, methylates large ribosomal subunit protein uL3 on a specific glutamine residue. In Aliivibrio fischeri (strain ATCC 700601 / ES114) (Vibrio fischeri), this protein is Ribosomal protein uL3 glutamine methyltransferase.